Consider the following 221-residue polypeptide: Hypoxanthine-guanine phosphoribosyltransferase (221 aa).

An N-acetylserine modification is found at S2. GMP-binding positions include K85, 110-118, K159, and 188-194; these read DEVDDTRTT and WYAYPWE. D114 acts as the Proton acceptor in catalysis.

Belongs to the purine/pyrimidine phosphoribosyltransferase family. In terms of assembly, dimer. The cofactor is Mg(2+).

The protein localises to the cytoplasm. It localises to the nucleus. The enzyme catalyses IMP + diphosphate = hypoxanthine + 5-phospho-alpha-D-ribose 1-diphosphate. It catalyses the reaction GMP + diphosphate = guanine + 5-phospho-alpha-D-ribose 1-diphosphate. The protein operates within purine metabolism; IMP biosynthesis via salvage pathway; IMP from hypoxanthine: step 1/1. Subject to feedback inhibition by GMP. Its function is as follows. Converts guanine to guanosine monophosphate, and hypoxanthine to inosine monophosphate. Transfers the 5-phosphoribosyl group from 5-phosphoribosylpyrophosphate onto the purine. Plays a central role in the generation of purine nucleotides through the purine salvage pathway. The protein is Hypoxanthine-guanine phosphoribosyltransferase (HPT1) of Saccharomyces cerevisiae (strain ATCC 204508 / S288c) (Baker's yeast).